Reading from the N-terminus, the 368-residue chain is N-acetylneuraminate epimerase (368 aa).

Residues M1–A19 form the signal peptide. Kelch repeat units lie at residues T40 to D84, N86 to N137, K139 to A173, Y174 to G219, T222 to G265, E287 to N336, and L338 to Q367. Catalysis depends on E228, which acts as the Proton acceptor.

It belongs to the NanM family. Homodimer.

The protein localises to the periplasm. The enzyme catalyses N-acetyl-alpha-neuraminate = N-acetyl-beta-neuraminate. Its function is as follows. Converts alpha-N-acetylneuranimic acid (Neu5Ac) to the beta-anomer, accelerating the equilibrium between the alpha- and beta-anomers. Probably facilitates sialidase-negative bacteria to compete successfully for limited amounts of extracellular Neu5Ac, which is likely taken up in the beta-anomer. In addition, the rapid removal of sialic acid from solution might be advantageous to the bacterium to damp down host responses. This chain is N-acetylneuraminate epimerase, found in Shigella boydii serotype 4 (strain Sb227).